Reading from the N-terminus, the 592-residue chain is Frizzled-5 (592 aa).

The N-terminal stretch at 1 to 38 (MRKPADEHHFTMETSGMHLVGFWLHVLLLFQLSGLGDS) is a signal peptide. Topologically, residues 39 to 248 (ASKDIVCEPI…QDERTFTTFW (210 aa)) are extracellular. An FZ domain is found at 40–161 (SKDIVCEPIT…GDTDRLCMDR (122 aa)). Disulfide bonds link Cys-45–Cys-106, Cys-53–Cys-99, Cys-90–Cys-128, Cys-117–Cys-158, and Cys-121–Cys-145. A disordered region spans residues 162–192 (NSSETTTLSPPFPKPTPKGTPRHRATAKSAP). The chain crosses the membrane as a helical span at residues 249–269 (IGLWSVLCFVSTFTTVATFLI). Residues 270-280 (DMERFKYPERP) are Cytoplasmic-facing. The chain crosses the membrane as a helical span at residues 281–301 (IIFLAACYLFVSLGYIVRLLA). Over 302–327 (GHERVACEGTGDQQHILYDTTGPALC) the chain is Extracellular. A helical membrane pass occupies residues 328 to 348 (TLVFLLIYFFGMASSIWWVVL). The Cytoplasmic segment spans residues 349-370 (SFTWFLAAGMKWGNEAIAGYSQ). Residues 371 to 391 (YFHLAAWLVPSVKSIAVLALS) traverse the membrane as a helical segment. Over 392–414 (SVDGDPVAGICYVGNQSLEGLRG) the chain is Extracellular. The chain crosses the membrane as a helical span at residues 415–435 (FVLAPLVVYLFTGSLFLLAGF). Over 436–461 (VSLFRIRSVIKQGGTKTDKLEKLMIR) the chain is Cytoplasmic. The helical transmembrane segment at 462–482 (IGLFTVLYTVPATIVVACLVY) threads the bilayer. Over 483–512 (EQHYRPSWERALACSCPSERQRLGMGPDYA) the chain is Extracellular. A helical membrane pass occupies residues 513–533 (VFMLKYFMCLVVGITSGVWIW). Topologically, residues 534 to 592 (SGKTLESWRRFIARYVPCRTRKPPVSASSMYSEASTALTARAGTAPTGTYHKSAPSSHV) are cytoplasmic.

Belongs to the G-protein coupled receptor Fz/Smo family.

It localises to the cell membrane. The protein resides in the golgi apparatus membrane. It is found in the synapse. The protein localises to the perikaryon. Its subcellular location is the cell projection. It localises to the dendrite. The protein resides in the axon. Its function is as follows. Receptor for Wnt proteins. Following binding, activates the canonical Wnt/beta-catenin signaling pathway. Also activates wnt non-canonical signaling. In neurons, activation of the Wnt pathway promotes formation of synapses. May be involved in transduction and intercellular transmission of polarity information during tissue morphogenesis and/or in differentiated tissues. Plays a role in early eye development, possibly through wnt non-canonical signaling. As a receptor for wnt11, promotes eye formation, at least partially, by antagonizing the Wnt/beta-catenin pathway. In addition, promotes coherence of eye field cells, potentially contributing to the coordinated morphogenetic behaviors of cells in the nascent eye field. The chain is Frizzled-5 (fzd5) from Danio rerio (Zebrafish).